We begin with the raw amino-acid sequence, 146 residues long: MLAVNFTAFFYNLNISNLTRQVNKMKMDELEKVMIVEGKSDKEKIESVLNEPMRIICTNGTISQLRLEELADELYDKDVYILVDADESGEKLRKQLKREFNEACHLHVDRAYKEVAAAPRHHIASVLLRANLNVHTIFLERKSRGV.

The 89-residue stretch at 31-119 (EKVMIVEGKS…RAYKEVAAAP (89 aa)) folds into the Toprim domain.

This is an uncharacterized protein from Bacillus subtilis (strain 168).